The chain runs to 197 residues: RIP-like protein (197 aa).

Residues 1–20 (MNSTQSPVYRTSVEQKRHAQ) form a disordered region. The segment at 122 to 191 (CPVCQIKNLR…GQLYDMCGSC (70 aa)) adopts an RIP-type zinc-finger fold.

This is RIP-like protein (Ripalpha) from Drosophila melanogaster (Fruit fly).